The primary structure comprises 90 residues: Cell division topological specificity factor (90 aa).

This sequence belongs to the MinE family.

Prevents the cell division inhibition by proteins MinC and MinD at internal division sites while permitting inhibition at polar sites. This ensures cell division at the proper site by restricting the formation of a division septum at the midpoint of the long axis of the cell. The polypeptide is Cell division topological specificity factor (Clostridium perfringens (strain SM101 / Type A)).